Reading from the N-terminus, the 947-residue chain is Bromodomain testis-specific protein (947 aa).

Residues 27-133 (RLTNQLQYLQ…KLFVQKLSQM (107 aa)) form the Bromo 1 domain. S187 bears the Phosphoserine mark. A Nuclear localization signal motif is present at residues 209–220 (KGVKRKADTTTP). The Bromo 2 domain maps to 267 to 376 (VKVTEQLRHC…DVFETHFSKI (110 aa)). Disordered stretches follow at residues 395-421 (ETTG…ERVQ), 444-512 (PFRK…PMNY), 610-690 (NNQL…VKKM), and 849-873 (HLEQ…GLTV). Positions 403-413 (NEASSEGNSSG) are enriched in low complexity. A coiled-coil region spans residues 417–470 (DERVQRLAKLQEQLKAVHQQLQVLSQVPFRKLNKKKEKSKKEKKKEKVNNSNEN). Over residues 447 to 462 (KLNKKKEKSKKEKKKE) the composition is skewed to basic residues. Over residues 470–481 (NPRKMCEQMRLK) the composition is skewed to basic and acidic residues. The segment covering 482 to 494 (EKSKRNQPKKRKQ) has biased composition (basic residues). An NET domain is found at 500 to 582 (KSEDEDNAKP…ACLRKRPLKP (83 aa)). A compositionally biased stretch (low complexity) spans 631-668 (VGSVSRLSESSSSSSSSSESESSSSDLSSSDSSGSESE). 2 stretches are compositionally biased toward basic and acidic residues: residues 674–690 (TEVK…VKKM) and 849–865 (HLEQ…ENQR).

This sequence belongs to the BET family. In terms of assembly, interacts with SMARCE1. Interacts with mRNA splicing machinery proteins SRSF2, DDX5, HNRNPK and TARDBP. Interacts with the acetylated N-terminus of histone H1, H2, H3 and H4. Interacts with P-TEFb components CDK9 and CCNT1/cyclin-T1. Ubiquitinated in a SPOP-dependent manner, leading to proteasomal degradation.

The protein resides in the nucleus. In terms of biological role, testis-specific chromatin protein that specifically binds histone H4 acetylated at 'Lys-5' and 'Lys-8' (H4K5ac and H4K8ac, respectively) and plays a key role in spermatogenesis. Required in late pachytene spermatocytes: plays a role in meiotic and post-meiotic cells by binding to acetylated histones at the promoter of specific meiotic and post-meiotic genes, facilitating their activation at the appropriate time. In the post-meiotic phase of spermatogenesis, binds to hyperacetylated histones and participates in their general removal from DNA. Also recognizes and binds a subset of butyrylated histones: able to bind histone H4 butyrylated at 'Lys-8' (H4K8ac), while it is not able to bind H4 butyrylated at 'Lys-5' (H4K5ac). Also acts as a component of the splicing machinery in pachytene spermatocytes and round spermatids and participates in 3'-UTR truncation of specific mRNAs in post-meiotic spermatids. Required for chromocenter organization, a structure comprised of peri-centromeric heterochromatin. The polypeptide is Bromodomain testis-specific protein (BRDT) (Macaca fascicularis (Crab-eating macaque)).